Reading from the N-terminus, the 159-residue chain is Putative 4-hydroxy-4-methyl-2-oxoglutarate aldolase (159 aa).

Substrate is bound by residues Gly-74 to Leu-77 and Arg-96. Asp-97 lines the a divalent metal cation pocket.

This sequence belongs to the class II aldolase/RraA-like family. In terms of assembly, homotrimer. It depends on a divalent metal cation as a cofactor.

The catalysed reaction is 4-hydroxy-4-methyl-2-oxoglutarate = 2 pyruvate. The enzyme catalyses oxaloacetate + H(+) = pyruvate + CO2. In terms of biological role, catalyzes the aldol cleavage of 4-hydroxy-4-methyl-2-oxoglutarate (HMG) into 2 molecules of pyruvate. Also contains a secondary oxaloacetate (OAA) decarboxylase activity due to the common pyruvate enolate transition state formed following C-C bond cleavage in the retro-aldol and decarboxylation reactions. The sequence is that of Putative 4-hydroxy-4-methyl-2-oxoglutarate aldolase from Bacillus anthracis.